The primary structure comprises 238 residues: Ribonuclease PH (238 aa).

Residues 67 to 87 (PRSTHTRSDREAARGKQSGRT) form a disordered region. Phosphate contacts are provided by residues arginine 86 and 124–126 (GTR).

The protein belongs to the RNase PH family. Homohexameric ring arranged as a trimer of dimers.

It catalyses the reaction tRNA(n+1) + phosphate = tRNA(n) + a ribonucleoside 5'-diphosphate. Its function is as follows. Phosphorolytic 3'-5' exoribonuclease that plays an important role in tRNA 3'-end maturation. Removes nucleotide residues following the 3'-CCA terminus of tRNAs; can also add nucleotides to the ends of RNA molecules by using nucleoside diphosphates as substrates, but this may not be physiologically important. Probably plays a role in initiation of 16S rRNA degradation (leading to ribosome degradation) during starvation. The protein is Ribonuclease PH of Ralstonia nicotianae (strain ATCC BAA-1114 / GMI1000) (Ralstonia solanacearum).